A 164-amino-acid chain; its full sequence is Protein-export protein SecB (164 aa).

The protein belongs to the SecB family. In terms of assembly, homotetramer, a dimer of dimers. One homotetramer interacts with 1 SecA dimer.

Its subcellular location is the cytoplasm. In terms of biological role, one of the proteins required for the normal export of preproteins out of the cell cytoplasm. It is a molecular chaperone that binds to a subset of precursor proteins, maintaining them in a translocation-competent state. It also specifically binds to its receptor SecA. This chain is Protein-export protein SecB, found in Ruegeria sp. (strain TM1040) (Silicibacter sp.).